The following is a 292-amino-acid chain: uncharacterized protein (292 aa).

Residues 175–197 form a helical membrane-spanning segment; that stretch reads VLNFYFTALPYAIDGIISGIGVF.

The protein resides in the membrane. This is an uncharacterized protein from Methanocaldococcus jannaschii (strain ATCC 43067 / DSM 2661 / JAL-1 / JCM 10045 / NBRC 100440) (Methanococcus jannaschii).